The primary structure comprises 94 residues: Co-chaperonin GroES (94 aa).

It belongs to the GroES chaperonin family. Heptamer of 7 subunits arranged in a ring. Interacts with the chaperonin GroEL.

The protein localises to the cytoplasm. Together with the chaperonin GroEL, plays an essential role in assisting protein folding. The GroEL-GroES system forms a nano-cage that allows encapsulation of the non-native substrate proteins and provides a physical environment optimized to promote and accelerate protein folding. GroES binds to the apical surface of the GroEL ring, thereby capping the opening of the GroEL channel. The polypeptide is Co-chaperonin GroES (Alkaliphilus metalliredigens (strain QYMF)).